A 183-amino-acid polypeptide reads, in one-letter code: A-type ATP synthase subunit E (183 aa).

The protein belongs to the V-ATPase E subunit family. In terms of assembly, has multiple subunits with at least A(3), B(3), C, D, E, F, H, I and proteolipid K(x).

Its subcellular location is the cell membrane. Functionally, component of the A-type ATP synthase that produces ATP from ADP in the presence of a proton gradient across the membrane. The protein is A-type ATP synthase subunit E of Methanosarcina barkeri (strain Fusaro / DSM 804).